Here is a 381-residue protein sequence, read N- to C-terminus: Probable envelope ADP,ATP carrier protein, chloroplastic (381 aa).

The transit peptide at 1–26 (MEEDRAILTFHRIPSLNSSLITTSSP) directs the protein to the chloroplast. Transmembrane regions (helical) follow at residues 78-98 (LAILALVPKDAAIFAAGALAG), 154-179 (LPQVIRVLPYSAVQLLAYESYKNLFK), 191-211 (LAAGACAGMTSTLLTYPLDVL), 237-257 (IASFYYGLGPSLVGIAPYIAV), and 281-301 (LLTAVLSAGIATLTCYPLDTV). Solcar repeat units follow at residues 85-177 (PKDA…YKNL), 185-268 (LSVI…VKKS), and 279-359 (SSLL…VKRL). Residue Arg-159 coordinates ADP. An ADP-binding site is contributed by Arg-302. A helical membrane pass occupies residues 334 to 360 (GFLPNALKTLPNSSIRLTTFDMVKRLI).

The protein belongs to the mitochondrial carrier (TC 2.A.29) family.

The protein resides in the plastid. The protein localises to the chloroplast membrane. Functionally, transports adenine nucleotides. The polypeptide is Probable envelope ADP,ATP carrier protein, chloroplastic (EAAC) (Arabidopsis thaliana (Mouse-ear cress)).